A 250-amino-acid chain; its full sequence is Ribosomal RNA small subunit methyltransferase J (250 aa).

S-adenosyl-L-methionine is bound by residues 96-97 and aspartate 168; that span reads RD.

This sequence belongs to the methyltransferase superfamily. RsmJ family.

The protein resides in the cytoplasm. It carries out the reaction guanosine(1516) in 16S rRNA + S-adenosyl-L-methionine = N(2)-methylguanosine(1516) in 16S rRNA + S-adenosyl-L-homocysteine + H(+). Its function is as follows. Specifically methylates the guanosine in position 1516 of 16S rRNA. The chain is Ribosomal RNA small subunit methyltransferase J from Neisseria meningitidis serogroup C / serotype 2a (strain ATCC 700532 / DSM 15464 / FAM18).